Reading from the N-terminus, the 211-residue chain is Endo-1,4-beta-xylanase A (211 aa).

The N-terminal stretch at 1–27 is a signal peptide; the sequence is MKVTAAFAGLLVTAFAAPVPEPVLVSR. The region spanning 28–210 is the GH11 domain; the sequence is SAGINYVQNY…GAGSASVTIS (183 aa). The Nucleophile role is filled by E106. An intrachain disulfide couples C119 to C138. Residue E197 is the Proton donor of the active site.

The protein belongs to the glycosyl hydrolase 11 (cellulase G) family.

It localises to the secreted. It carries out the reaction Endohydrolysis of (1-&gt;4)-beta-D-xylosidic linkages in xylans.. Its pathway is glycan degradation; xylan degradation. Functionally, endo-1,4-beta-xylanase involved in the hydrolysis of xylan, a major structural heterogeneous polysaccharide found in plant biomass representing the second most abundant polysaccharide in the biosphere, after cellulose. In Aspergillus niger, this protein is Endo-1,4-beta-xylanase A (xynA).